The primary structure comprises 498 residues: Hexokinase-1 (498 aa).

A helical membrane pass occupies residues 4-24 (VTVGAAVVGAAAVCAVAALIV). The 454-residue stretch at 35–488 (GRAMAILREF…SGIGAALLRA (454 aa)) folds into the Hexokinase domain. Residues 89 to 228 (QLVMKLGVFY…VLDMRVSALV (140 aa)) form a hexokinase small subdomain region. ADP is bound by residues G104, T105, and N106. Residues T194, K195, N229, and D230 each contribute to the D-glucose site. The hexokinase large subdomain stretch occupies residues 229 to 477 (NDTVGTLAGG…TSIVFVHSND (249 aa)). T253 contacts ADP. Residues N256, E284, and E315 each contribute to the D-glucose site. Position 442 (G442) interacts with ADP.

Belongs to the hexokinase family. In terms of tissue distribution, expressed in young and mature leaves, stems, roots, stolons, and developing and mature tubers.

The protein resides in the plastid. Its subcellular location is the chloroplast outer membrane. It carries out the reaction a D-hexose + ATP = a D-hexose 6-phosphate + ADP + H(+). The enzyme catalyses D-fructose + ATP = D-fructose 6-phosphate + ADP + H(+). The catalysed reaction is D-glucose + ATP = D-glucose 6-phosphate + ADP + H(+). Its pathway is carbohydrate metabolism; hexose metabolism. It participates in carbohydrate degradation; glycolysis; D-glyceraldehyde 3-phosphate and glycerone phosphate from D-glucose: step 1/4. In terms of biological role, fructose and glucose phosphorylating enzyme. May be involved in the phosphorylation of glucose during the export from plastids to cytosol. Seems neither to be involved in cell sugar sensing nor in carbohydrate metabolism in tuber. This chain is Hexokinase-1 (HXK1), found in Solanum tuberosum (Potato).